The primary structure comprises 507 residues: MDFEYLPFNLVTFFIFLFFVFLLIYGRRKSKRTXKINLPPGPWKLPILGNLHNMMMGSSPHHIFRDLSRKYGDLMLIKLGEFNTIVASSPRMAKEVLKTHDLSFLNRPIIQATKILCYDNSALVFSQYGDSWRQMRKIFVLELLSTKRVRSFQPIRQDEGSRLVSLIKESVGKSIDLSEKIKLYTTSMVARAAFGKVNDAGVTFLKLVTEAAEVAEGFDPADMFPSYKFLNVFFNSRSNLLKIHGKTDMILEEMIDEHIKSHQMGKKANGENGEEDVIDILLSIKDSGDLGISHWMNNVKALIFDMFSAGTETSSATVEWAMTELMKNPSVMRKAQDEVRQAFKGKKTIDESDLEELKYLKLVVKEVLRLHPFAPLLVPRECREACQIDGYDIPVKTRVFVNVWAIGRDEKYWKDPESFIPERFEDNSLDFTGNNFEYLPFGCGRRICPGMTFGLANVHLVLALLLYHFNWKLPPGVNDIDMAERPGLGASKKHGLVLVPSFYQPSF.

A run of 2 helical transmembrane segments spans residues 6 to 26 and 447 to 467; these read LPFN…LIYG and ICPG…LLLY. Residue Cys448 coordinates heme.

It belongs to the cytochrome P450 family.

It localises to the membrane. The sequence is that of Cytochrome P450 71D2 from Catharanthus roseus (Madagascar periwinkle).